The chain runs to 268 residues: GTP cyclohydrolase 1 type 2 homolog (268 aa).

Residues H66, H67, D105, H227, and E231 each coordinate a divalent metal cation.

The protein belongs to the GTP cyclohydrolase I type 2/NIF3 family. Homohexamer.

This chain is GTP cyclohydrolase 1 type 2 homolog, found in Clostridium acetobutylicum (strain ATCC 824 / DSM 792 / JCM 1419 / IAM 19013 / LMG 5710 / NBRC 13948 / NRRL B-527 / VKM B-1787 / 2291 / W).